The following is a 384-amino-acid chain: S-adenosylmethionine synthase (384 aa).

An ATP-binding site is contributed by histidine 15. Position 17 (aspartate 17) interacts with Mg(2+). Position 43 (glutamate 43) interacts with K(+). L-methionine contacts are provided by glutamate 56 and glutamine 99. The tract at residues 99–109 is flexible loop; the sequence is QSPDINQGVDR. Residues 164–166, 230–231, aspartate 239, 245–246, alanine 262, and lysine 266 contribute to the ATP site; these read DAK, RF, and RK. Aspartate 239 is an L-methionine binding site. An L-methionine-binding site is contributed by lysine 270.

It belongs to the AdoMet synthase family. Homotetramer; dimer of dimers. Requires Mg(2+) as cofactor. It depends on K(+) as a cofactor.

The protein localises to the cytoplasm. It carries out the reaction L-methionine + ATP + H2O = S-adenosyl-L-methionine + phosphate + diphosphate. It functions in the pathway amino-acid biosynthesis; S-adenosyl-L-methionine biosynthesis; S-adenosyl-L-methionine from L-methionine: step 1/1. In terms of biological role, catalyzes the formation of S-adenosylmethionine (AdoMet) from methionine and ATP. The overall synthetic reaction is composed of two sequential steps, AdoMet formation and the subsequent tripolyphosphate hydrolysis which occurs prior to release of AdoMet from the enzyme. In Yersinia pseudotuberculosis serotype IB (strain PB1/+), this protein is S-adenosylmethionine synthase.